We begin with the raw amino-acid sequence, 296 residues long: SPbeta prophage-derived endonuclease YokF (296 aa).

Positions 1–19 (MKKVLLGFAAFTLSLSLAA) are cleaved as a signal peptide. A lipid anchor (N-palmitoyl cysteine) is attached at Cys-20. A lipid anchor (S-diacylglycerol cysteine) is attached at Cys-20. The disordered stretch occupies residues 20 to 65 (CSSNDSEKVSTEKETPQASTDVEKKTEQKESTKEKTADKSKEKDKK). Over residues 24 to 65 (DSEKVSTEKETPQASTDVEKKTEQKESTKEKTADKSKEKDKK) the composition is skewed to basic and acidic residues. Positions 66 to 199 (ELVDVTLDRA…KSEKLSIWSK (134 aa)) constitute a TNase-like domain. Asp-79 contacts Ca(2+). The active site involves Arg-93. The Ca(2+) site is built by Asp-98 and Thr-99. Residues Glu-101 and Arg-144 contribute to the active site. A disordered region spans residues 218-296 (AVKKATTSKP…RDHDNYACER (79 aa)). A compositionally biased stretch (low complexity) spans 219–244 (VKKATTSKPAATQPTTPKASSETSTT). Positions 284–296 (KMDRDHDNYACER) are enriched in basic and acidic residues.

Requires Ca(2+) as cofactor. The cofactor is Cu(2+). Mn(2+) is required as a cofactor.

It is found in the cell membrane. With respect to regulation, inhibited by aurintricalboxylic acid but not by Zn(2+), Mn(2+), Hg(2+), 2-mercaptoethanol and sodium citrate. Neither inhibited nor activated by ATP. In terms of biological role, catalyzes the hydrolysis of supercoiled double and single strand DNA and RNA. Involved in chromosomal DNA degradation and cell death caused by thermal stress. The protein is SPbeta prophage-derived endonuclease YokF (yokF) of Bacillus subtilis (strain 168).